We begin with the raw amino-acid sequence, 174 residues long: Large ribosomal subunit protein uL10 (174 aa).

This sequence belongs to the universal ribosomal protein uL10 family. In terms of assembly, part of the ribosomal stalk of the 50S ribosomal subunit. The N-terminus interacts with L11 and the large rRNA to form the base of the stalk. The C-terminus forms an elongated spine to which L12 dimers bind in a sequential fashion forming a multimeric L10(L12)X complex.

In terms of biological role, forms part of the ribosomal stalk, playing a central role in the interaction of the ribosome with GTP-bound translation factors. This is Large ribosomal subunit protein uL10 from Synechococcus sp. (strain RCC307).